Consider the following 412-residue polypeptide: Phosphate-repressible acid phosphatase (412 aa).

The N-terminal stretch at 1–19 is a signal peptide; it reads MLTKQTLLAFVGALALATG. Asn74, Asn121, Asn186, and Asn208 each carry an N-linked (GlcNAc...) asparagine glycan. Asp215 serves as the catalytic Proton donor. Residues Asn217, Asn332, and Asn343 are each glycosylated (N-linked (GlcNAc...) asparagine).

In terms of processing, the N-terminus is blocked.

Its subcellular location is the secreted. The enzyme catalyses a phosphate monoester + H2O = an alcohol + phosphate. This chain is Phosphate-repressible acid phosphatase (PHOA), found in Penicillium chrysogenum (Penicillium notatum).